The sequence spans 533 residues: Protein trichome birefringence-like 18 (533 aa).

Residues 21-41 (VSTVAIAIGGLASFFVFGLLL) form a helical; Signal-anchor for type II membrane protein membrane-spanning segment. A disordered region spans residues 93–171 (SDSSSGLPVV…PDDVSETASA (79 aa)). A compositionally biased stretch (basic and acidic residues) spans 113-154 (SSDRKLETPLTQEKEDLVSSDITEKTDVQSGERETNVSKAED). Residues 248 to 250 (GDS) carry the GDS motif motif. Positions 475–502 (HDGHPGPFRSPDPNKITKRGPDGRPPPQ) are disordered. The short motif at 503 to 517 (DCLHWCMPGPVDTWN) is the DCXHWCLPGXXDXWN motif element.

This sequence belongs to the PC-esterase family. TBL subfamily.

It is found in the membrane. May act as a bridging protein that binds pectin and other cell wall polysaccharides. Probably involved in maintaining esterification of pectins. May be involved in the specific O-acetylation of cell wall polymers. This Arabidopsis thaliana (Mouse-ear cress) protein is Protein trichome birefringence-like 18 (TBL18).